Reading from the N-terminus, the 405-residue chain is Argininosuccinate synthase (405 aa).

12 to 20 (AYSGGLDTS) is a binding site for ATP. L-citrulline contacts are provided by Y90 and S95. G120 is a binding site for ATP. 3 residues coordinate L-aspartate: T122, N126, and D127. N126 contributes to the L-citrulline binding site. L-citrulline-binding residues include R130, S179, S188, E265, and Y277.

This sequence belongs to the argininosuccinate synthase family. Type 1 subfamily. In terms of assembly, homotetramer.

Its subcellular location is the cytoplasm. The enzyme catalyses L-citrulline + L-aspartate + ATP = 2-(N(omega)-L-arginino)succinate + AMP + diphosphate + H(+). It functions in the pathway amino-acid biosynthesis; L-arginine biosynthesis; L-arginine from L-ornithine and carbamoyl phosphate: step 2/3. The sequence is that of Argininosuccinate synthase from Clostridium perfringens (strain 13 / Type A).